A 150-amino-acid polypeptide reads, in one-letter code: Histone H2A.1 (150 aa).

Methionine 1 carries the N-acetylmethionine modification. 2 stretches are compositionally biased toward basic residues: residues 1–24 (MDAS…KKSV) and 141–150 (SKAKKSPKKA). Disordered regions lie at residues 1 to 26 (MDAS…SVTR) and 128 to 150 (RKEN…PKKA). 2 short sequence motifs (SPKK motif) span residues 139–142 (SPSK) and 146–149 (SPKK).

It belongs to the histone H2A family. As to quaternary structure, the nucleosome is a histone octamer containing two molecules each of H2A, H2B, H3 and H4 assembled in one H3-H4 heterotetramer and two H2A-H2B heterodimers. The octamer wraps approximately 147 bp of DNA. High expression in root meristematic tissues, moderate in whole shoot and very low in mature leaves.

It is found in the nucleus. The protein localises to the chromosome. Functionally, core component of nucleosome. Nucleosomes wrap and compact DNA into chromatin, limiting DNA accessibility to the cellular machineries which require DNA as a template. Histones thereby play a central role in transcription regulation, DNA repair, DNA replication and chromosomal stability. DNA accessibility is regulated via a complex set of post-translational modifications of histones, also called histone code, and nucleosome remodeling. The protein is Histone H2A.1 of Pisum sativum (Garden pea).